We begin with the raw amino-acid sequence, 211 residues long: Imidazole glycerol phosphate synthase subunit HisH (211 aa).

Residues 4 to 211 (RVVILDYGSG…QLLANWVATL (208 aa)) enclose the Glutamine amidotransferase type-1 domain. Cysteine 82 functions as the Nucleophile in the catalytic mechanism. Catalysis depends on residues histidine 192 and glutamate 194.

In terms of assembly, heterodimer of HisH and HisF.

The protein resides in the cytoplasm. It carries out the reaction 5-[(5-phospho-1-deoxy-D-ribulos-1-ylimino)methylamino]-1-(5-phospho-beta-D-ribosyl)imidazole-4-carboxamide + L-glutamine = D-erythro-1-(imidazol-4-yl)glycerol 3-phosphate + 5-amino-1-(5-phospho-beta-D-ribosyl)imidazole-4-carboxamide + L-glutamate + H(+). It catalyses the reaction L-glutamine + H2O = L-glutamate + NH4(+). It participates in amino-acid biosynthesis; L-histidine biosynthesis; L-histidine from 5-phospho-alpha-D-ribose 1-diphosphate: step 5/9. Functionally, IGPS catalyzes the conversion of PRFAR and glutamine to IGP, AICAR and glutamate. The HisH subunit catalyzes the hydrolysis of glutamine to glutamate and ammonia as part of the synthesis of IGP and AICAR. The resulting ammonia molecule is channeled to the active site of HisF. This is Imidazole glycerol phosphate synthase subunit HisH from Thermobifida fusca (strain YX).